The primary structure comprises 146 residues: 3-hydroxyacyl-[acyl-carrier-protein] dehydratase FabZ (146 aa).

Residue H49 is part of the active site.

This sequence belongs to the thioester dehydratase family. FabZ subfamily.

Its subcellular location is the cytoplasm. It catalyses the reaction a (3R)-hydroxyacyl-[ACP] = a (2E)-enoyl-[ACP] + H2O. In terms of biological role, involved in unsaturated fatty acids biosynthesis. Catalyzes the dehydration of short chain beta-hydroxyacyl-ACPs and long chain saturated and unsaturated beta-hydroxyacyl-ACPs. This Azotobacter vinelandii (strain DJ / ATCC BAA-1303) protein is 3-hydroxyacyl-[acyl-carrier-protein] dehydratase FabZ.